A 378-amino-acid chain; its full sequence is MNLHEYQAKEILARYGVPVPPGKVAYTPEEAKRIAEEFGKRVVIKAQVHVGGRGKAGGVKLADTPQEAYEKAQAILGMNIKGLTVKKVLVAEAVDIAKEYYAGLILDRAKKRVVLMLSKEGGVDIEEVAAERPEAIHKFWIDPHKGFRPFEAREMVKRAGLEGNLNKLAQVLVALYRAYEGVDASIAEINPLVVTTDGGIVAADAKIVLDDNALFRHPDLAELREVEAEHPLEVEASNYGFAYVKLDGNIGIIGNGAGLVMYTLDLVNRVGGKPANFLDIGGGAKADVVYNALKVVLKDPDVKGVFINIFGGITRADEVAKGVIRALEEGLLTKPVVMRVAGTAEEEAKKLLEGKPVYMYPTSIEAAKAIVAMVGGAA.

The ATP-grasp domain occupies 9–235; that stretch reads KEILARYGVP…VEAEHPLEVE (227 aa). GTP is bound by residues Lys-45, 52-54, Val-94, and Glu-99; that span reads GRG. Mg(2+) is bound by residues Asn-190 and Asp-204. Residues Asn-255 and 312–314 each bind substrate; that span reads GIT.

Belongs to the succinate/malate CoA ligase beta subunit family. Heterotetramer of two alpha and two beta subunits. It depends on Mg(2+) as a cofactor.

It carries out the reaction GTP + succinate + CoA = succinyl-CoA + GDP + phosphate. The enzyme catalyses succinate + ATP + CoA = succinyl-CoA + ADP + phosphate. It participates in carbohydrate metabolism; tricarboxylic acid cycle; succinate from succinyl-CoA (ligase route): step 1/1. In terms of biological role, succinyl-CoA synthetase functions in the citric acid cycle (TCA), coupling the hydrolysis of succinyl-CoA to the synthesis of either ATP or GTP and thus represents the only step of substrate-level phosphorylation in the TCA. The beta subunit provides nucleotide specificity of the enzyme and binds the substrate succinate, while the binding sites for coenzyme A and phosphate are found in the alpha subunit. Can use either ATP or GTP, but prefers GTP. This Thermus thermophilus protein is Succinate--CoA ligase [GDP-forming] subunit beta.